Consider the following 505-residue polypeptide: Maturase K (505 aa).

The protein belongs to the intron maturase 2 family. MatK subfamily.

It is found in the plastid. The protein resides in the chloroplast. Usually encoded in the trnK tRNA gene intron. Probably assists in splicing its own and other chloroplast group II introns. The polypeptide is Maturase K (Illicium oligandrum (Star anise)).